The following is a 275-amino-acid chain: MIGGERVLLGSQKREPSNEEDDQEQLDIDLTSDGKNQRYQPAPNDTISRYHLNHIVYTLRWVIMAFKKLKTKYPPLCLSDSKMDQIAADLIRRLHVLLRREELRSEMSRGRRVSRNLTEAGRNGGLPLGLRRARRAQSAPDRTERIKFYQEMLRFVREPPMISTSLQPSPAESWDHDRFLKDWSQRGEEEETDDTKELCETYGGEVNQDSREEDQQAPAETEVIEVCKPGDGEENAKDDSEQEQAPVVTTEVIEVQSSSGSNSPDDGNEQLRHHM.

Disordered stretches follow at residues 1–25 (MIGG…DQEQ) and 185–275 (QRGE…RHHM). Residues 228–239 (KPGDGEENAKDD) are compositionally biased toward basic and acidic residues.

This is an uncharacterized protein from Neurospora crassa (strain ATCC 24698 / 74-OR23-1A / CBS 708.71 / DSM 1257 / FGSC 987).